Here is a 401-residue protein sequence, read N- to C-terminus: Acetylornithine aminotransferase (401 aa).

Residues 121–122 (GA) and phenylalanine 154 contribute to the pyridoxal 5'-phosphate site. Arginine 157 contacts N(2)-acetyl-L-ornithine. 239–242 (DEVQ) lines the pyridoxal 5'-phosphate pocket. At lysine 268 the chain carries N6-(pyridoxal phosphate)lysine. Residue serine 296 coordinates N(2)-acetyl-L-ornithine. Residue threonine 297 participates in pyridoxal 5'-phosphate binding.

The protein belongs to the class-III pyridoxal-phosphate-dependent aminotransferase family. ArgD subfamily. In terms of assembly, homodimer. The cofactor is pyridoxal 5'-phosphate.

The protein resides in the cytoplasm. It catalyses the reaction N(2)-acetyl-L-ornithine + 2-oxoglutarate = N-acetyl-L-glutamate 5-semialdehyde + L-glutamate. Its pathway is amino-acid biosynthesis; L-arginine biosynthesis; N(2)-acetyl-L-ornithine from L-glutamate: step 4/4. In Myxococcus xanthus, this protein is Acetylornithine aminotransferase.